Reading from the N-terminus, the 332-residue chain is L-lactate dehydrogenase A chain (332 aa).

Residue alanine 2 is modified to N-acetylalanine. The residue at position 5 (lysine 5) is an N6-acetyllysine; alternate. Lysine 5 bears the N6-succinyllysine; alternate mark. Lysine 14 is modified (N6-acetyllysine). Residue 29–57 coordinates NAD(+); that stretch reads GAVGMACAISILMKELADEIALVDVMEDK. The residue at position 57 (lysine 57) is an N6-acetyllysine; alternate. Lysine 57 is covalently cross-linked (Glycyl lysine isopeptide (Lys-Gly) (interchain with G-Cter in SUMO2); alternate). Lysine 81 carries the N6-acetyllysine modification. NAD(+) is bound at residue arginine 99. Arginine 106 serves as a coordination point for substrate. Lysine 118 carries the N6-acetyllysine; alternate modification. Lysine 118 carries the post-translational modification N6-succinyllysine; alternate. Residue lysine 126 is modified to N6-acetyllysine. NAD(+) is bound at residue asparagine 138. Residues asparagine 138 and arginine 169 each coordinate substrate. Histidine 193 acts as the Proton acceptor in catalysis. N6-acetyllysine is present on residues lysine 224 and lysine 232. Tyrosine 239 carries the post-translational modification Phosphotyrosine. N6-acetyllysine is present on lysine 243. Position 248 (threonine 248) interacts with substrate. Residue threonine 309 is modified to Phosphothreonine. Position 318 is an N6-acetyllysine; alternate (lysine 318). Lysine 318 carries the N6-succinyllysine; alternate modification. The residue at position 322 (threonine 322) is a Phosphothreonine.

Belongs to the LDH/MDH superfamily. LDH family. Homotetramer. Interacts with PTEN upstream reading frame protein MP31. Post-translationally, ISGylated.

Its subcellular location is the cytoplasm. The enzyme catalyses (S)-lactate + NAD(+) = pyruvate + NADH + H(+). It participates in fermentation; pyruvate fermentation to lactate; (S)-lactate from pyruvate: step 1/1. Functionally, interconverts simultaneously and stereospecifically pyruvate and lactate with concomitant interconversion of NADH and NAD(+). The polypeptide is L-lactate dehydrogenase A chain (LDHA) (Sus scrofa (Pig)).